Here is a 570-residue protein sequence, read N- to C-terminus: Periplasmic trehalase (570 aa).

An N-terminal signal peptide occupies residues 1–34 (MIPPEIRRSVLLQKAIKLALAGTLLTFASFSATA). Substrate is bound by residues Arg-159, 166 to 167 (WD), Asn-203, 212 to 214 (RSQ), 284 to 286 (RPE), and Gly-317. Active-site proton donor/acceptor residues include Asp-319 and Glu-503. Glu-518 is a substrate binding site. The segment at 544–570 (KPCDSVPSTRPASLSATPTKTPSAATQ) is disordered. Residues 554–570 (PASLSATPTKTPSAATQ) are compositionally biased toward low complexity.

Belongs to the glycosyl hydrolase 37 family. Monomer.

The protein resides in the periplasm. The catalysed reaction is alpha,alpha-trehalose + H2O = alpha-D-glucose + beta-D-glucose. Its function is as follows. Provides the cells with the ability to utilize trehalose at high osmolarity by splitting it into glucose molecules that can subsequently be taken up by the phosphotransferase-mediated uptake system. In Salmonella paratyphi A (strain AKU_12601), this protein is Periplasmic trehalase.